Consider the following 372-residue polypeptide: ATP phosphoribosyltransferase regulatory subunit (372 aa).

The protein belongs to the class-II aminoacyl-tRNA synthetase family. HisZ subfamily. As to quaternary structure, heteromultimer composed of HisG and HisZ subunits.

Its subcellular location is the cytoplasm. Its pathway is amino-acid biosynthesis; L-histidine biosynthesis; L-histidine from 5-phospho-alpha-D-ribose 1-diphosphate: step 1/9. Required for the first step of histidine biosynthesis. May allow the feedback regulation of ATP phosphoribosyltransferase activity by histidine. In Rhizobium rhizogenes (strain K84 / ATCC BAA-868) (Agrobacterium radiobacter), this protein is ATP phosphoribosyltransferase regulatory subunit.